Consider the following 398-residue polypeptide: Cathepsin E (398 aa).

An N-terminal signal peptide occupies residues 1–21; sequence MKPLFVLLLLLLLLDLAQAQG. A propeptide spans 22–58 (activation peptide); the sequence is VLHRVPLRRHQSLRKKLRAQGQLSDFWRSHNLDMIEF. The 315-residue stretch at 80-394 folds into the Peptidase A1 domain; that stretch reads YFGTVSIGSP…DRGNNQVGLA (315 aa). A glycan (N-linked (GlcNAc...) asparagine) is linked at asparagine 92. Residue aspartate 98 is part of the active site. Disulfide bonds link cysteine 111–cysteine 116 and cysteine 274–cysteine 278. Residue aspartate 283 is part of the active site.

This sequence belongs to the peptidase A1 family. Homodimer; disulfide-linked. Glycosylated. The nature of the carbohydrate chain varies between cell types. In brain microglia, the proenzyme contains a high mannose-type oligosaccharide, while the mature enzyme contains a complex-type oligosaccharide. In stomach and spleen, the mature enzyme contains a high mannose-type oligosaccharide. In erythrocyte membranes, the mature enzyme contains a complex-type oligosaccharide. In terms of tissue distribution, expressed abundantly in lymphocytes and macrophages of the thymus and spleen, and in the M cells of the intestine. In the brain, expression is limited to reactive microglial cells, the large pyrimidial neurons in the cerebral cortex, the CA1 and CA3 pyrimidial neurons of the hippocampus, the large neurons of the neostriatum, and the Purkinje neurons of the cerebellum.

It is found in the endosome. The catalysed reaction is Similar to cathepsin D, but slightly broader specificity.. Functionally, may have a role in immune function. Probably involved in the processing of antigenic peptides during MHC class II-mediated antigen presentation. May play a role in activation-induced lymphocyte depletion in the thymus, and in neuronal degeneration and glial cell activation in the brain. This chain is Cathepsin E (Ctse), found in Rattus norvegicus (Rat).